A 294-amino-acid chain; its full sequence is Protein RarD (294 aa).

The Cytoplasmic segment spans residues 1 to 11; the sequence is MDAKQTRQGVL. The chain crosses the membrane as a helical span at residues 12-34; the sequence is LALAAYFIWGIAPAYFKLIYYVP. The 128-residue stretch at 18 to 145 folds into the EamA domain; the sequence is FIWGIAPAYF…AVCGVLVQLW (128 aa). Over 35 to 37 the chain is Periplasmic; it reads ADE. A helical transmembrane segment spans residues 38-60; it reads ILTHRVIWSFFFMVALLSVSRQW. The Cytoplasmic segment spans residues 61–72; that stretch reads RQVKRLLKTPKK. The chain crosses the membrane as a helical span at residues 73–95; sequence IFLLALSAVLVGGNWLLFIWAVN. The Periplasmic portion of the chain corresponds to 96–99; the sequence is NHHM. Residues 100–122 form a helical membrane-spanning segment; it reads LEASLGYFINPLVNILLGMIFLG. Residues 123–128 lie on the Cytoplasmic side of the membrane; sequence ERFRRM. Residues 129–146 traverse the membrane as a helical segment; sequence QWLAVILAVCGVLVQLWT. Residues 147–149 are Periplasmic-facing; that stretch reads FGS. The chain crosses the membrane as a helical span at residues 150 to 167; it reads LPIIALGLAFSFAFYGLV. Residues 168-179 are Cytoplasmic-facing; that stretch reads RKKIAVEAQTGM. A helical membrane pass occupies residues 180-197; the sequence is LVETLWLLPVAAIYLFGI. At 198-211 the chain is on the periplasmic side; the sequence is ADSPTSHMGQNALS. The helical transmembrane segment at 212-234 threads the bilayer; the sequence is LNLLLMAAGVVTTIPLLCFTGAA. The Cytoplasmic segment spans residues 235–238; the sequence is TRLR. Residues 239–261 traverse the membrane as a helical segment; it reads LSTLGFFQYIGPTLMFLLAVTFY. The Periplasmic segment spans residues 262–270; sequence GEVPGADKM. A helical transmembrane segment spans residues 271–290; that stretch reads VTFAFIWVALAIFVMDAIYT. Residues 291 to 294 are Cytoplasmic-facing; the sequence is QRKK.

It belongs to the EamA transporter family.

Its subcellular location is the cell inner membrane. This Salmonella typhimurium (strain LT2 / SGSC1412 / ATCC 700720) protein is Protein RarD (rarD).